The following is a 314-amino-acid chain: 4-hydroxy-3-methylbut-2-enyl diphosphate reductase (314 aa).

C12 is a [4Fe-4S] cluster binding site. (2E)-4-hydroxy-3-methylbut-2-enyl diphosphate-binding residues include H41 and H74. 2 residues coordinate dimethylallyl diphosphate: H41 and H74. Isopentenyl diphosphate is bound by residues H41 and H74. C96 is a binding site for [4Fe-4S] cluster. H124 contacts (2E)-4-hydroxy-3-methylbut-2-enyl diphosphate. Residue H124 coordinates dimethylallyl diphosphate. H124 contributes to the isopentenyl diphosphate binding site. Residue E126 is the Proton donor of the active site. A (2E)-4-hydroxy-3-methylbut-2-enyl diphosphate-binding site is contributed by T167. C197 serves as a coordination point for [4Fe-4S] cluster. The (2E)-4-hydroxy-3-methylbut-2-enyl diphosphate site is built by S225, S226, N227, and S269. 4 residues coordinate dimethylallyl diphosphate: S225, S226, N227, and S269. Isopentenyl diphosphate contacts are provided by S225, S226, N227, and S269.

This sequence belongs to the IspH family. It depends on [4Fe-4S] cluster as a cofactor.

It carries out the reaction isopentenyl diphosphate + 2 oxidized [2Fe-2S]-[ferredoxin] + H2O = (2E)-4-hydroxy-3-methylbut-2-enyl diphosphate + 2 reduced [2Fe-2S]-[ferredoxin] + 2 H(+). It catalyses the reaction dimethylallyl diphosphate + 2 oxidized [2Fe-2S]-[ferredoxin] + H2O = (2E)-4-hydroxy-3-methylbut-2-enyl diphosphate + 2 reduced [2Fe-2S]-[ferredoxin] + 2 H(+). It functions in the pathway isoprenoid biosynthesis; dimethylallyl diphosphate biosynthesis; dimethylallyl diphosphate from (2E)-4-hydroxy-3-methylbutenyl diphosphate: step 1/1. It participates in isoprenoid biosynthesis; isopentenyl diphosphate biosynthesis via DXP pathway; isopentenyl diphosphate from 1-deoxy-D-xylulose 5-phosphate: step 6/6. Functionally, catalyzes the conversion of 1-hydroxy-2-methyl-2-(E)-butenyl 4-diphosphate (HMBPP) into a mixture of isopentenyl diphosphate (IPP) and dimethylallyl diphosphate (DMAPP). Acts in the terminal step of the DOXP/MEP pathway for isoprenoid precursor biosynthesis. The chain is 4-hydroxy-3-methylbut-2-enyl diphosphate reductase from Glaesserella parasuis serovar 5 (strain SH0165) (Haemophilus parasuis).